Consider the following 218-residue polypeptide: Translation initiation factor 6 (218 aa).

This sequence belongs to the eIF-6 family.

Functionally, binds to the 50S ribosomal subunit and prevents its association with the 30S ribosomal subunit to form the 70S initiation complex. The sequence is that of Translation initiation factor 6 from Methanosarcina acetivorans (strain ATCC 35395 / DSM 2834 / JCM 12185 / C2A).